We begin with the raw amino-acid sequence, 436 residues long: Glutamyl-tRNA reductase (436 aa).

Residues 49 to 52 (TCNR), S109, 114 to 116 (EGQ), and Q120 each bind substrate. C50 acts as the Nucleophile in catalysis. 198 to 203 (GAGRMS) contacts NADP(+).

It belongs to the glutamyl-tRNA reductase family. Homodimer.

The enzyme catalyses (S)-4-amino-5-oxopentanoate + tRNA(Glu) + NADP(+) = L-glutamyl-tRNA(Glu) + NADPH + H(+). It functions in the pathway porphyrin-containing compound metabolism; protoporphyrin-IX biosynthesis; 5-aminolevulinate from L-glutamyl-tRNA(Glu): step 1/2. It participates in porphyrin-containing compound metabolism; chlorophyll biosynthesis. In terms of biological role, catalyzes the NADPH-dependent reduction of glutamyl-tRNA(Glu) to glutamate 1-semialdehyde (GSA). The chain is Glutamyl-tRNA reductase from Prochlorococcus marinus (strain MIT 9312).